The following is a 122-amino-acid chain: uncharacterized protein (122 aa).

A signal peptide spans 1-18 (MYSMAFLASSGLVANSSA). Asn-15 is a glycosylation site (N-linked (GlcNAc...) asparagine).

This is an uncharacterized protein from Saccharomyces cerevisiae (strain ATCC 204508 / S288c) (Baker's yeast).